The primary structure comprises 94 residues: Large ribosomal subunit protein uL23 (94 aa).

It belongs to the universal ribosomal protein uL23 family. In terms of assembly, part of the 50S ribosomal subunit. Contacts protein L29, and trigger factor when it is bound to the ribosome.

Functionally, one of the early assembly proteins it binds 23S rRNA. One of the proteins that surrounds the polypeptide exit tunnel on the outside of the ribosome. Forms the main docking site for trigger factor binding to the ribosome. The sequence is that of Large ribosomal subunit protein uL23 from Exiguobacterium sibiricum (strain DSM 17290 / CCUG 55495 / CIP 109462 / JCM 13490 / 255-15).